A 280-amino-acid chain; its full sequence is UPF0276 protein NMB2142 (280 aa).

It belongs to the UPF0276 family.

In Neisseria meningitidis serogroup B (strain ATCC BAA-335 / MC58), this protein is UPF0276 protein NMB2142.